Here is a 277-residue protein sequence, read N- to C-terminus: MSLEDAFDEPAFVPYLAAGDPDFESSLAYVEALARGGADVIELGLPFSEPIAEGPTIQQAVVRSLEGGMTPERFFEFVETLDVDVPLVCMTYYNLIYQYGPAGSQPVVPFVERAAEVGLKGFVVPDLPAEEAGPLREACDEYGLDLVFIVAPTTAGDRLERMMEQVSGYVYVQARLGVTGAREDVSDRTAETLARLEAYDVPKAVGFGISSGEQAEAVVAAGADGVIVGSALVDIVAEGHENGDAPDVVADRLESLARELKSGAVAGKQRQPGPERT.

Active-site proton acceptor residues include E42 and E53.

This sequence belongs to the TrpA family. As to quaternary structure, tetramer of two alpha and two beta chains.

The catalysed reaction is (1S,2R)-1-C-(indol-3-yl)glycerol 3-phosphate + L-serine = D-glyceraldehyde 3-phosphate + L-tryptophan + H2O. It functions in the pathway amino-acid biosynthesis; L-tryptophan biosynthesis; L-tryptophan from chorismate: step 5/5. Functionally, the alpha subunit is responsible for the aldol cleavage of indoleglycerol phosphate to indole and glyceraldehyde 3-phosphate. This Natronomonas pharaonis (strain ATCC 35678 / DSM 2160 / CIP 103997 / JCM 8858 / NBRC 14720 / NCIMB 2260 / Gabara) (Halobacterium pharaonis) protein is Tryptophan synthase alpha chain.